We begin with the raw amino-acid sequence, 95 residues long: Aspartyl/glutamyl-tRNA(Asn/Gln) amidotransferase subunit C (95 aa).

This sequence belongs to the GatC family. Heterotrimer of A, B and C subunits.

It catalyses the reaction L-glutamyl-tRNA(Gln) + L-glutamine + ATP + H2O = L-glutaminyl-tRNA(Gln) + L-glutamate + ADP + phosphate + H(+). The enzyme catalyses L-aspartyl-tRNA(Asn) + L-glutamine + ATP + H2O = L-asparaginyl-tRNA(Asn) + L-glutamate + ADP + phosphate + 2 H(+). Functionally, allows the formation of correctly charged Asn-tRNA(Asn) or Gln-tRNA(Gln) through the transamidation of misacylated Asp-tRNA(Asn) or Glu-tRNA(Gln) in organisms which lack either or both of asparaginyl-tRNA or glutaminyl-tRNA synthetases. The reaction takes place in the presence of glutamine and ATP through an activated phospho-Asp-tRNA(Asn) or phospho-Glu-tRNA(Gln). The sequence is that of Aspartyl/glutamyl-tRNA(Asn/Gln) amidotransferase subunit C from Acidithiobacillus ferrooxidans (strain ATCC 23270 / DSM 14882 / CIP 104768 / NCIMB 8455) (Ferrobacillus ferrooxidans (strain ATCC 23270)).